A 125-amino-acid polypeptide reads, in one-letter code: MIRNIIITISAILLLTSKGFADDTISNTSKKDTKTDITTQKILDEFYAYAGTIKPEIREEIQKYRVEIVNINKKKRELYDKLSKEAQNFLAKEQEYKQRLSSSSMATEDSKDNNTAKDNKDADKK.

The N-terminal stretch at 1-21 (MIRNIIITISAILLLTSKGFA) is a signal peptide. A coiled-coil region spans residues 54–102 (KPEIREEIQKYRVEIVNINKKKRELYDKLSKEAQNFLAKEQEYKQRLSS). Residues 96 to 125 (YKQRLSSSSMATEDSKDNNTAKDNKDADKK) are disordered. The span at 108–125 (EDSKDNNTAKDNKDADKK) shows a compositional bias: basic and acidic residues.

This is an uncharacterized protein from Rickettsia bellii (strain RML369-C).